We begin with the raw amino-acid sequence, 105 residues long: Small cysteine and glycine repeat-containing protein 6 (105 aa).

The tract at residues 4 to 83 is 13 X 2 AA repeats of CG; the sequence is CGCGGCGGGC…HSCGCGCGCG (80 aa).

This sequence belongs to the KRTAP type 28 family.

In the hair cortex, hair keratin intermediate filaments are embedded in an interfilamentous matrix, consisting of hair keratin-associated proteins (KRTAP), which are essential for the formation of a rigid and resistant hair shaft through their extensive disulfide bond cross-linking with abundant cysteine residues of hair keratins. The matrix proteins include the high-sulfur and high-glycine-tyrosine keratins. In Homo sapiens (Human), this protein is Small cysteine and glycine repeat-containing protein 6.